Reading from the N-terminus, the 206-residue chain is Large ribosomal subunit protein uL4 (206 aa).

The interval 45 to 85 (QGNRAQKDREQVKHTTKKPWRQKGTGRARAGMSSSPLWRGG) is disordered. The segment covering 58 to 70 (HTTKKPWRQKGTG) has biased composition (basic residues).

It belongs to the universal ribosomal protein uL4 family. As to quaternary structure, part of the 50S ribosomal subunit.

One of the primary rRNA binding proteins, this protein initially binds near the 5'-end of the 23S rRNA. It is important during the early stages of 50S assembly. It makes multiple contacts with different domains of the 23S rRNA in the assembled 50S subunit and ribosome. Its function is as follows. Forms part of the polypeptide exit tunnel. The sequence is that of Large ribosomal subunit protein uL4 from Burkholderia mallei (strain NCTC 10247).